Reading from the N-terminus, the 546-residue chain is CCA tRNA nucleotidyltransferase, mitochondrial (546 aa).

The protein belongs to the tRNA nucleotidyltransferase/poly(A) polymerase family.

The protein resides in the mitochondrion. It is found in the cytoplasm. The protein localises to the nucleus. It carries out the reaction a tRNA precursor + 2 CTP + ATP = a tRNA with a 3' CCA end + 3 diphosphate. In terms of biological role, nucleotidyltransferase that catalyzes the addition and repair of the essential 3'-terminal CCA sequence in tRNAs, which is necessary for the attachment of amino acids to the 3' terminus of tRNA molecules, using CTP and ATP as substrates. tRNA 3'-terminal CCA addition is required both for tRNA processing and repair. Also involved in tRNA surveillance by mediating tandem CCA addition to generate a CCACCA at the 3' terminus of unstable tRNAs. While stable tRNAs receive only 3'-terminal CCA, unstable tRNAs are marked with CCACCA and rapidly degraded. The structural flexibility of RNA controls the choice between CCA versus CCACCA addition: following the first CCA addition cycle, nucleotide-binding to the active site triggers a clockwise screw motion, producing torque on the RNA. This ejects stable RNAs, whereas unstable RNAs are refolded while bound to the enzyme and subjected to a second CCA catalytic cycle. The polypeptide is CCA tRNA nucleotidyltransferase, mitochondrial (CCA1) (Saccharomyces cerevisiae (strain ATCC 204508 / S288c) (Baker's yeast)).